The sequence spans 277 residues: Large ribosomal subunit protein uL2 (277 aa).

2 disordered regions span residues 36 to 55 (PLPK…RHHG) and 213 to 277 (WKGI…RKKK).

It belongs to the universal ribosomal protein uL2 family. Part of the 50S ribosomal subunit. Forms a bridge to the 30S subunit in the 70S ribosome.

One of the primary rRNA binding proteins. Required for association of the 30S and 50S subunits to form the 70S ribosome, for tRNA binding and peptide bond formation. It has been suggested to have peptidyltransferase activity; this is somewhat controversial. Makes several contacts with the 16S rRNA in the 70S ribosome. This is Large ribosomal subunit protein uL2 from Staphylococcus saprophyticus subsp. saprophyticus (strain ATCC 15305 / DSM 20229 / NCIMB 8711 / NCTC 7292 / S-41).